A 66-amino-acid polypeptide reads, in one-letter code: MPKLKTKSSVKKRFSVTATGKIKSTQSAKRHGMTKRSKRSIRVQRGTTVMNQSDSRIIKLFMPYSR.

Over residues 18 to 27 the composition is skewed to polar residues; the sequence is ATGKIKSTQS. The interval 18–41 is disordered; that stretch reads ATGKIKSTQSAKRHGMTKRSKRSI. Positions 28–41 are enriched in basic residues; that stretch reads AKRHGMTKRSKRSI.

This sequence belongs to the bacterial ribosomal protein bL35 family.

The polypeptide is Large ribosomal subunit protein bL35 (Ehrlichia ruminantium (strain Gardel)).